We begin with the raw amino-acid sequence, 341 residues long: Ferrochelatase (341 aa).

2 residues coordinate Fe cation: His-189 and Glu-293.

The protein belongs to the ferrochelatase family.

The protein localises to the cytoplasm. The catalysed reaction is heme b + 2 H(+) = protoporphyrin IX + Fe(2+). It functions in the pathway porphyrin-containing compound metabolism; protoheme biosynthesis; protoheme from protoporphyrin-IX: step 1/1. In terms of biological role, catalyzes the ferrous insertion into protoporphyrin IX. The protein is Ferrochelatase of Stutzerimonas stutzeri (strain A1501) (Pseudomonas stutzeri).